The primary structure comprises 229 residues: Phosphoglycolate phosphatase (229 aa).

The active-site Nucleophile is Asp18. Mg(2+)-binding residues include Asp18, Asp20, and Asp176.

The protein belongs to the HAD-like hydrolase superfamily. CbbY/CbbZ/Gph/YieH family. Mg(2+) serves as cofactor.

The catalysed reaction is 2-phosphoglycolate + H2O = glycolate + phosphate. It functions in the pathway organic acid metabolism; glycolate biosynthesis; glycolate from 2-phosphoglycolate: step 1/1. Functionally, specifically catalyzes the dephosphorylation of 2-phosphoglycolate. Is involved in the dissimilation of the intracellular 2-phosphoglycolate formed during the DNA repair of 3'-phosphoglycolate ends, a major class of DNA lesions induced by oxidative stress. This chain is Phosphoglycolate phosphatase, found in Xylella fastidiosa (strain Temecula1 / ATCC 700964).